Here is a 553-residue protein sequence, read N- to C-terminus: T-complex protein 1 subunit eta (553 aa).

Position 41 (Gly-41) interacts with ADP. Position 41 (Gly-41) interacts with ATP. Asp-92 provides a ligand contact to Mg(2+). Residues Gly-93, Thr-94, Thr-95, Ser-96, Ser-164, and Ser-165 each contribute to the ADP site. Gly-93 contributes to the ATP binding site. Residue Ser-96 participates in ATP binding. ATP is bound by residues Arg-398 and Gly-409. 3 residues coordinate ADP: Gly-409, Glu-494, and Arg-499. Residue Arg-499 participates in ATP binding. Residues 523-553 (PRSTVDAPPGGRGRGRGQTPQPLRPRSVALS) form a disordered region. Positions 539–553 (GQTPQPLRPRSVALS) are enriched in low complexity.

In terms of assembly, component of the chaperonin-containing T-complex (TRiC), a hexadecamer composed of two identical back-to-back stacked rings enclosing a protein folding chamber. Each ring is made up of eight different subunits: TCP1/CCT1, CCT2, CCT3, CCT4, CCT5, CCT6A/CCT6, CCT7, CCT8.

Its subcellular location is the cytoplasm. It catalyses the reaction ATP + H2O = ADP + phosphate + H(+). In terms of biological role, component of the chaperonin-containing T-complex (TRiC), a molecular chaperone complex that assists the folding of actin, tubulin and other proteins upon ATP hydrolysis. The protein is T-complex protein 1 subunit eta of Gallus gallus (Chicken).